A 434-amino-acid polypeptide reads, in one-letter code: Putative polysaccharide biosynthesis protein with aminopeptidase-like domain (434 aa).

2 aminopeptidase-like regions span residues 1 to 55 (MEEI…IHEV) and 57 to 355 (SGTK…IENN). The tract at residues 56-164 (KSGTKVFDWT…VVIDSSLEDG (109 aa)) is insert. Residues histidine 189, aspartate 195, and histidine 324 each contribute to the Zn(2+) site. The tract at residues 356–434 (RTYLNLNPKC…LYRVELLKLV (79 aa)) is permutated winged helix-turn-helix.

It belongs to the UPF0770 family. Homotrimer. Zn(2+) serves as cofactor.

In terms of biological role, the genomic context suggests a role in the biosynthesis of modified polysaccharides; this association with genes involved in carbohydrate metabolism is observed in several phylogenetically distinct taxa. Is not expected to have peptidase activity despite low similarity to aminopeptidases. This chain is Putative polysaccharide biosynthesis protein with aminopeptidase-like domain, found in Clostridium acetobutylicum (strain ATCC 824 / DSM 792 / JCM 1419 / IAM 19013 / LMG 5710 / NBRC 13948 / NRRL B-527 / VKM B-1787 / 2291 / W).